The sequence spans 431 residues: Glutamate-1-semialdehyde 2,1-aminomutase 2 (431 aa).

Lys-268 is modified (N6-(pyridoxal phosphate)lysine).

Belongs to the class-III pyridoxal-phosphate-dependent aminotransferase family. HemL subfamily. In terms of assembly, homodimer. Requires pyridoxal 5'-phosphate as cofactor.

The protein localises to the cytoplasm. It carries out the reaction (S)-4-amino-5-oxopentanoate = 5-aminolevulinate. It participates in porphyrin-containing compound metabolism; protoporphyrin-IX biosynthesis; 5-aminolevulinate from L-glutamyl-tRNA(Glu): step 2/2. The chain is Glutamate-1-semialdehyde 2,1-aminomutase 2 from Anoxybacillus flavithermus (strain DSM 21510 / WK1).